The following is a 283-amino-acid chain: Protein-S-isoprenylcysteine O-methyltransferase (283 aa).

At 1–15 the chain is on the cytoplasmic side; it reads MAAARRGSAGSEARL. The helical transmembrane segment at 16–32 threads the bilayer; the sequence is SLATFLLGASVLALPLL. Over 33-40 the chain is Lumenal; sequence TRAGLQGR. Residues 41–58 form a helical membrane-spanning segment; that stretch reads TGLALYVAGLNALLLLLY. At 59-68 the chain is on the cytoplasmic side; sequence RPPRYQIAIR. Residues 69 to 86 traverse the membrane as a helical segment; that stretch reads ACFLGFVFGCGVLLSFSQ. Over 87 to 91 the chain is Lumenal; it reads SSWNH. Residues 92 to 111 form a helical membrane-spanning segment; it reads FGWYVCSLSLFHYSEYLVTA. Residues 112–130 are Cytoplasmic-facing; sequence VNNPKSLSLDSFLLNHSLE. A helical transmembrane segment spans residues 131 to 148; it reads YTVAALSSWIEFTLENIF. The Lumenal segment spans residues 149–153; sequence WPELK. A helical membrane pass occupies residues 154–173; that stretch reads QITWLSATGLLMVVFGECLR. The Cytoplasmic segment spans residues 174–211; that stretch reads KAAMFTAGSNFNHVVQSEKSDTHTLVTSGVYAWCRHPS. S-adenosyl-L-methionine contacts are provided by residues Q189, 196 to 199, Y204, and 209 to 212; these read HTLV and HPSY. The chain crosses the membrane as a helical span at residues 212–227; the sequence is YVGWFYWSIGTQVMLC. Position 228 (N228) is a topological domain, lumenal. Residues 229 to 243 traverse the membrane as a helical segment; the sequence is PICGVVYALTVWRFF. Topologically, residues 244-283 are cytoplasmic; that stretch reads RDRTEEEEISLIHFFGEEYLDYKKRVPTGLPFIKGVKVEL. R246 is a substrate binding site. Position 250 (E250) interacts with S-adenosyl-L-methionine.

It belongs to the class VI-like SAM-binding methyltransferase superfamily. Isoprenylcysteine carboxyl methyltransferase family. In terms of tissue distribution, highly enriched in adult cerebellum, with a low level expression in other brain regions.

The protein localises to the endoplasmic reticulum membrane. The enzyme catalyses [protein]-C-terminal S-[(2E,6E)-farnesyl]-L-cysteine + S-adenosyl-L-methionine = [protein]-C-terminal S-[(2E,6E)-farnesyl]-L-cysteine methyl ester + S-adenosyl-L-homocysteine. Catalyzes the post-translational methylation of isoprenylated C-terminal cysteine residues. This chain is Protein-S-isoprenylcysteine O-methyltransferase (Icmt), found in Mus musculus (Mouse).